The chain runs to 420 residues: MKIYLVGGAVRDQLLNLVVKDRDWVVVGATPDDLLSQGYQQVGKDFPVFLHPQTKEEYALARTERKAGSGYTGFICDFSPTISLEQDLSRRDLTINALAQDLDGKIYDFYGGLTDLKQRLLRHVSPAFAEDPLRVLRVARFAARYHALGFTIASETRELMQQLSQSGELSNLTAERVWLETEKALLEPHPEVYFQTLQEVGALQVLFPELAALQGVPNPAKYHPEIDTFVHTMLVLQQAVLLTENTDSDKSAVRFAAICHDLGKALTPKEILPHHYGHEKAGVMPTRRLCQRFKLPHAIQDFAELCCEYHSHIHKAFELRAETILKLFNRLDVWRKPERFKALLLVCIADTRGRTGFEQVDYPQREFLWQLYQSALQVNVQDIIQQGFQQQAIRDELNRRRIIAIKQTRAEILPRFTNPC.

Residues Gly-8 and Arg-11 each coordinate ATP. CTP-binding residues include Gly-8 and Arg-11. Asp-21 and Asp-23 together coordinate Mg(2+). Positions 91, 137, and 140 each coordinate ATP. CTP contacts are provided by Arg-91, Arg-137, and Arg-140. Residues 228–334 (TFVHTMLVLQ…LKLFNRLDVW (107 aa)) enclose the HD domain.

Belongs to the tRNA nucleotidyltransferase/poly(A) polymerase family. Bacterial CCA-adding enzyme type 1 subfamily. In terms of assembly, monomer. Can also form homodimers and oligomers. Mg(2+) is required as a cofactor. The cofactor is Ni(2+).

It carries out the reaction a tRNA precursor + 2 CTP + ATP = a tRNA with a 3' CCA end + 3 diphosphate. The enzyme catalyses a tRNA with a 3' CCA end + 2 CTP + ATP = a tRNA with a 3' CCACCA end + 3 diphosphate. Catalyzes the addition and repair of the essential 3'-terminal CCA sequence in tRNAs without using a nucleic acid template. Adds these three nucleotides in the order of C, C, and A to the tRNA nucleotide-73, using CTP and ATP as substrates and producing inorganic pyrophosphate. tRNA 3'-terminal CCA addition is required both for tRNA processing and repair. Also involved in tRNA surveillance by mediating tandem CCA addition to generate a CCACCA at the 3' terminus of unstable tRNAs. While stable tRNAs receive only 3'-terminal CCA, unstable tRNAs are marked with CCACCA and rapidly degraded. The polypeptide is Multifunctional CCA protein (Pasteurella multocida (strain Pm70)).